The following is a 500-amino-acid chain: NAD(P)H-quinone oxidoreductase chain 4, chloroplastic (500 aa).

Helical transmembrane passes span 4 to 24 (FPWLTIIVVLPIFAGSSIFFF), 35 to 55 (YTICICLLELLLTTYAFCYHF), 87 to 107 (IGPVLLTGFITTLATLAAWPV), 113 to 130 (LFHFLMLAMYSGQIGSFS), 134 to 154 (LLLFFIMWELELIPVYLLLSM), 167 to 187 (FILYTAGGSIFLLIGVSGMGL), 208 to 228 (ALEILLYFGFFIAYAVKLPII), 242 to 262 (HYSTCMLLAGILLKMGAYGLV), 272 to 292 (AHSIFSPWLMIVGTIQIIYAA), 305 to 325 (IAYSSVSHMGFTILGISSITD), 330 to 350 (GAILQMISHGFIGAALFFLAG), 386 to 406 (LALPGMSGFVAELVVFFGIIT), 416 to 436 (ILITFVTAIGMILTPIYSLSM), and 463 to 483 (FVSICIFLPVIGIGIYPDFVF).

The protein belongs to the complex I subunit 4 family.

The protein resides in the plastid. It localises to the chloroplast thylakoid membrane. It catalyses the reaction a plastoquinone + NADH + (n+1) H(+)(in) = a plastoquinol + NAD(+) + n H(+)(out). The enzyme catalyses a plastoquinone + NADPH + (n+1) H(+)(in) = a plastoquinol + NADP(+) + n H(+)(out). This Nandina domestica (Heavenly bamboo) protein is NAD(P)H-quinone oxidoreductase chain 4, chloroplastic.